We begin with the raw amino-acid sequence, 362 residues long: Sulfoquinovose monooxygenase (362 aa).

The protein belongs to the SsuD family.

It catalyses the reaction 6-sulfo-D-quinovose + FMNH2 + O2 = 6-dehydro-D-glucose + FMN + sulfite + H2O + 2 H(+). Its function is as follows. Part of the alkanesulfonate monooxygenase (sulfo-ASMO) pathway, a D-sulfoquinovose degradation pathway that enables the complete utilization of all carbons within sulfoquinovose (SQ) with concomitant production of inorganic sulfite. Catalyzes the oxidative desulfurization of sulfoquinovose to sulfite and 6-dehydro-D-glucose. The chain is Sulfoquinovose monooxygenase from Novosphingobium aromaticivorans (strain ATCC 700278 / DSM 12444 / CCUG 56034 / CIP 105152 / NBRC 16084 / F199).